A 325-amino-acid chain; its full sequence is Probable isoaspartyl peptidase/L-asparaginase 2 (325 aa).

T195 acts as the Nucleophile in catalysis. Substrate-binding positions include 223–226 (RIGD) and 245–248 (TGEG).

It belongs to the Ntn-hydrolase family. Heterotetramer of two alpha and two beta chains arranged as a dimer of alpha/beta heterodimers. In terms of processing, cleaved into an alpha and beta chain by autocatalysis; this activates the enzyme. The N-terminal residue of the beta subunit is responsible for the nucleophile hydrolase activity.

The enzyme catalyses Cleavage of a beta-linked Asp residue from the N-terminus of a polypeptide.. Acts in asparagine catabolism and also in the final steps of protein degradation via hydrolysis of a range of isoaspartyl dipeptides. The sequence is that of Probable isoaspartyl peptidase/L-asparaginase 2 from Arabidopsis thaliana (Mouse-ear cress).